The chain runs to 374 residues: S-adenosylmethionine:tRNA ribosyltransferase-isomerase (374 aa).

The protein belongs to the QueA family. Monomer.

The protein resides in the cytoplasm. The catalysed reaction is 7-aminomethyl-7-carbaguanosine(34) in tRNA + S-adenosyl-L-methionine = epoxyqueuosine(34) in tRNA + adenine + L-methionine + 2 H(+). It functions in the pathway tRNA modification; tRNA-queuosine biosynthesis. Transfers and isomerizes the ribose moiety from AdoMet to the 7-aminomethyl group of 7-deazaguanine (preQ1-tRNA) to give epoxyqueuosine (oQ-tRNA). In Prochlorococcus marinus (strain MIT 9301), this protein is S-adenosylmethionine:tRNA ribosyltransferase-isomerase.